Reading from the N-terminus, the 92-residue chain is MARSVWKGPFVDGYLLNKADAARASGRNEIIKIWSRRSTILPQFVGLTFGVYNGHKFLPVQVTENMVGHKFGEFSPTRTFPGHAADKKAKRG.

This sequence belongs to the universal ribosomal protein uS19 family.

In terms of biological role, protein S19 forms a complex with S13 that binds strongly to the 16S ribosomal RNA. The protein is Small ribosomal subunit protein uS19 of Granulibacter bethesdensis (strain ATCC BAA-1260 / CGDNIH1).